The following is a 343-amino-acid chain: UDP-3-O-acylglucosamine N-acyltransferase (343 aa).

His236 acts as the Proton acceptor in catalysis.

The protein belongs to the transferase hexapeptide repeat family. LpxD subfamily. In terms of assembly, homotrimer.

It carries out the reaction a UDP-3-O-[(3R)-3-hydroxyacyl]-alpha-D-glucosamine + a (3R)-hydroxyacyl-[ACP] = a UDP-2-N,3-O-bis[(3R)-3-hydroxyacyl]-alpha-D-glucosamine + holo-[ACP] + H(+). Its pathway is bacterial outer membrane biogenesis; LPS lipid A biosynthesis. In terms of biological role, catalyzes the N-acylation of UDP-3-O-acylglucosamine using 3-hydroxyacyl-ACP as the acyl donor. Is involved in the biosynthesis of lipid A, a phosphorylated glycolipid that anchors the lipopolysaccharide to the outer membrane of the cell. The protein is UDP-3-O-acylglucosamine N-acyltransferase of Syntrophotalea carbinolica (strain DSM 2380 / NBRC 103641 / GraBd1) (Pelobacter carbinolicus).